The primary structure comprises 97 residues: Putative pterin-4-alpha-carbinolamine dehydratase (97 aa).

It belongs to the pterin-4-alpha-carbinolamine dehydratase family.

The catalysed reaction is (4aS,6R)-4a-hydroxy-L-erythro-5,6,7,8-tetrahydrobiopterin = (6R)-L-erythro-6,7-dihydrobiopterin + H2O. The sequence is that of Putative pterin-4-alpha-carbinolamine dehydratase from Dinoroseobacter shibae (strain DSM 16493 / NCIMB 14021 / DFL 12).